A 48-amino-acid polypeptide reads, in one-letter code: ATP synthase protein 8 (48 aa).

The helical transmembrane segment at 13-33 threads the bilayer; that stretch reads LTYGFLLLIILLVLFSQFLLP.

It belongs to the ATPase protein 8 family. F-type ATPases have 2 components, CF(1) - the catalytic core - and CF(0) - the membrane proton channel.

Its subcellular location is the mitochondrion membrane. Mitochondrial membrane ATP synthase (F(1)F(0) ATP synthase or Complex V) produces ATP from ADP in the presence of a proton gradient across the membrane which is generated by electron transport complexes of the respiratory chain. F-type ATPases consist of two structural domains, F(1) - containing the extramembraneous catalytic core and F(0) - containing the membrane proton channel, linked together by a central stalk and a peripheral stalk. During catalysis, ATP synthesis in the catalytic domain of F(1) is coupled via a rotary mechanism of the central stalk subunits to proton translocation. Part of the complex F(0) domain. Minor subunit located with subunit a in the membrane. In Wickerhamomyces canadensis (Yeast), this protein is ATP synthase protein 8 (ATP8).